We begin with the raw amino-acid sequence, 239 residues long: Purine nucleoside phosphorylase DeoD-type 1 (239 aa).

His5 provides a ligand contact to a purine D-ribonucleoside. Phosphate is bound by residues Gly21, Arg25, Arg44, and 88 to 91 (RVGS). A purine D-ribonucleoside-binding positions include 180–182 (EME) and 204–205 (SD). Asp205 functions as the Proton donor in the catalytic mechanism.

The protein belongs to the PNP/UDP phosphorylase family. In terms of assembly, homohexamer; trimer of homodimers.

It carries out the reaction a purine D-ribonucleoside + phosphate = a purine nucleobase + alpha-D-ribose 1-phosphate. The catalysed reaction is a purine 2'-deoxy-D-ribonucleoside + phosphate = a purine nucleobase + 2-deoxy-alpha-D-ribose 1-phosphate. In terms of biological role, catalyzes the reversible phosphorolytic breakdown of the N-glycosidic bond in the beta-(deoxy)ribonucleoside molecules, with the formation of the corresponding free purine bases and pentose-1-phosphate. This chain is Purine nucleoside phosphorylase DeoD-type 1, found in Vibrio vulnificus (strain CMCP6).